Reading from the N-terminus, the 223-residue chain is Deoxyribose-phosphate aldolase (223 aa).

The Proton donor/acceptor role is filled by Asp-89. The active-site Schiff-base intermediate with acetaldehyde is Lys-152. Lys-181 (proton donor/acceptor) is an active-site residue.

Belongs to the DeoC/FbaB aldolase family. DeoC type 1 subfamily.

The protein localises to the cytoplasm. It carries out the reaction 2-deoxy-D-ribose 5-phosphate = D-glyceraldehyde 3-phosphate + acetaldehyde. Its pathway is carbohydrate degradation; 2-deoxy-D-ribose 1-phosphate degradation; D-glyceraldehyde 3-phosphate and acetaldehyde from 2-deoxy-alpha-D-ribose 1-phosphate: step 2/2. In terms of biological role, catalyzes a reversible aldol reaction between acetaldehyde and D-glyceraldehyde 3-phosphate to generate 2-deoxy-D-ribose 5-phosphate. This Listeria innocua serovar 6a (strain ATCC BAA-680 / CLIP 11262) protein is Deoxyribose-phosphate aldolase.